The chain runs to 400 residues: Coiled-coil domain-containing glutamate-rich protein 1 (400 aa).

The segment covering Met1–Pro11 has biased composition (basic and acidic residues). Disordered regions lie at residues Met1–Pro68, Arg134–Asp164, and Gln203–Leu353. Over residues Tyr31–Tyr45 the composition is skewed to basic residues. A compositionally biased stretch (basic and acidic residues) spans Arg46–Arg57. Residues Gly137–Phe157 are compositionally biased toward basic residues. Over residues Gln209–Ala220 the composition is skewed to low complexity. Residues Pro255–Thr271 are compositionally biased toward polar residues. The segment covering Val275–Arg347 has biased composition (acidic residues). Residues Glu299 to Val335 are a coiled coil.

Its subcellular location is the nucleus. In terms of biological role, regulator of histone epigenetic modifications and chromatin compaction into the sperm head, required for histone-to-protamine (HTP) transition. HTP is a key event in which somatic histones are first replaced by testis-specific histone variants, then transition proteins (TNPs) are incorporated into the spermatid nucleus, and finally protamines (PRMs) replace the TNPs to promote chromatin condensation. The chain is Coiled-coil domain-containing glutamate-rich protein 1 (Ccer1) from Rattus norvegicus (Rat).